Here is a 1690-residue protein sequence, read N- to C-terminus: DNA-directed RNA polymerase subunit beta' (1690 aa).

Residues C63, C65, C78, and C81 each coordinate Zn(2+). D753, D755, and D757 together coordinate Mg(2+). Zn(2+)-binding residues include C1107, C1295, C1302, and C1305.

Belongs to the RNA polymerase beta' chain family. The RNAP catalytic core consists of 2 alpha, 1 beta, 1 beta' and 1 omega subunit. When a sigma factor is associated with the core the holoenzyme is formed, which can initiate transcription. Mg(2+) serves as cofactor. It depends on Zn(2+) as a cofactor.

The catalysed reaction is RNA(n) + a ribonucleoside 5'-triphosphate = RNA(n+1) + diphosphate. In terms of biological role, DNA-dependent RNA polymerase catalyzes the transcription of DNA into RNA using the four ribonucleoside triphosphates as substrates. The sequence is that of DNA-directed RNA polymerase subunit beta' from Thermotoga petrophila (strain ATCC BAA-488 / DSM 13995 / JCM 10881 / RKU-1).